A 64-amino-acid chain; its full sequence is MLNLEAIIETGEQVIQKISFNLQHISSVLNTEVFDPFDYCYYRGGNFWEIESAEDCSGDDEFIE.

This Avian infectious bronchitis virus (strain M41) (IBV) protein is Non-structural protein 3b.